A 150-amino-acid polypeptide reads, in one-letter code: Large ribosomal subunit protein bL9 (150 aa).

Belongs to the bacterial ribosomal protein bL9 family.

Functionally, binds to the 23S rRNA. This Shewanella frigidimarina (strain NCIMB 400) protein is Large ribosomal subunit protein bL9.